A 424-amino-acid chain; its full sequence is Phosphomethylpyrimidine synthase (424 aa).

Residues asparagine 66, methionine 95, tyrosine 124, histidine 163, 185-187, 226-229, and glutamate 265 contribute to the substrate site; these read SRG and DGMR. Histidine 269 contributes to the Zn(2+) binding site. Phenylalanine 292 provides a ligand contact to substrate. Residue histidine 333 participates in Zn(2+) binding. 3 residues coordinate [4Fe-4S] cluster: cysteine 408, cysteine 411, and cysteine 415.

Belongs to the ThiC family. [4Fe-4S] cluster is required as a cofactor.

The catalysed reaction is 5-amino-1-(5-phospho-beta-D-ribosyl)imidazole + S-adenosyl-L-methionine = 4-amino-2-methyl-5-(phosphooxymethyl)pyrimidine + CO + 5'-deoxyadenosine + formate + L-methionine + 3 H(+). Its pathway is cofactor biosynthesis; thiamine diphosphate biosynthesis. Functionally, catalyzes the synthesis of the hydroxymethylpyrimidine phosphate (HMP-P) moiety of thiamine from aminoimidazole ribotide (AIR) in a radical S-adenosyl-L-methionine (SAM)-dependent reaction. The protein is Phosphomethylpyrimidine synthase of Thermotoga sp. (strain RQ2).